A 375-amino-acid polypeptide reads, in one-letter code: Actin, cytoplasmic (375 aa).

This sequence belongs to the actin family.

The protein resides in the cytoplasm. The protein localises to the cytoskeleton. The enzyme catalyses ATP + H2O = ADP + phosphate + H(+). Functionally, actins are highly conserved proteins that are involved in various types of cell motility and are ubiquitously expressed in all eukaryotic cells. In Sterkiella nova (Ciliate), this protein is Actin, cytoplasmic.